Consider the following 155-residue polypeptide: Small ribosomal subunit protein uS7c (155 aa).

It belongs to the universal ribosomal protein uS7 family. As to quaternary structure, part of the 30S ribosomal subunit.

It localises to the plastid. The protein localises to the chloroplast. Functionally, one of the primary rRNA binding proteins, it binds directly to 16S rRNA where it nucleates assembly of the head domain of the 30S subunit. This Pinus thunbergii (Japanese black pine) protein is Small ribosomal subunit protein uS7c (rps7).